Reading from the N-terminus, the 244-residue chain is Thiol S-methyltransferase TMT1A (244 aa).

Residues Met1–Trp28 form a targeting to lipid droplets region. The first 29 residues, Met1–Ser29, serve as a signal peptide directing secretion.

The protein belongs to the methyltransferase superfamily. In terms of assembly, (Microbial infection) Interacts with HCV non-structural protein 4B/NS4B (via C-terminal region); this interaction may promote the recruitment of NS4B in the proximity of lipid droplet. Self-associates. Interacts with SNRNP200; this interaction may promote the odontogenic differentiation. Post-translationally, methylated at lysine residues most likely by EZH2. As to expression, expressed in the liver.

It is found in the lipid droplet. Its subcellular location is the endoplasmic reticulum. The protein resides in the membrane. The protein localises to the microsome. It localises to the cytoplasm. It is found in the cytosol. It catalyses the reaction a thiol + S-adenosyl-L-methionine = a methyl thioether + S-adenosyl-L-homocysteine + H(+). It carries out the reaction an adenosine in mRNA + S-adenosyl-L-methionine = an N(6)-methyladenosine in mRNA + S-adenosyl-L-homocysteine + H(+). Inhibited by 2,3-dichloro-alpha-methylbenzylamine (DCMB). Its function is as follows. Thiol S-methyltransferase that catalyzes the transfer of a methyl group from S-adenosyl-L-methionine to alkyl and phenolic thiol-containing acceptor substrates. Together with TMT1B accounts for most of S-thiol methylation activity in the endoplasmic reticulum of hepatocytes. Able to methylate the N6 position of adenosine residues in long non-coding RNAs (lncRNAs). May facilitate lncRNAs transfer into exosomes at the tumor-stroma interface. Promotes osteogenic and odontogenic differentiation by regulating the expression of genes involved in stem cell differentiation and survival. Targeted from the endoplasmic reticulum to lipid droplets, where it recruits cellular proteins to form functional organelles. In terms of biological role, (Microbial infection) May be involved in the assembly and release stages of hepatitis C virus (HCV) life cycle and thus play a crucial role in HCV propagation. The protein is Thiol S-methyltransferase TMT1A of Homo sapiens (Human).